Here is a 441-residue protein sequence, read N- to C-terminus: Deoxyguanosinetriphosphate triphosphohydrolase-like protein 1 (441 aa).

The region spanning 62-255 (RLTHSLEAAQ…MELADDIAYG (194 aa)) is the HD domain.

It belongs to the dGTPase family. Type 2 subfamily.

In Vibrio cholerae serotype O1 (strain ATCC 39315 / El Tor Inaba N16961), this protein is Deoxyguanosinetriphosphate triphosphohydrolase-like protein 1.